The following is a 37-amino-acid chain: Large ribosomal subunit protein bL36 (37 aa).

It belongs to the bacterial ribosomal protein bL36 family.

This chain is Large ribosomal subunit protein bL36 (rpmJ), found in Mycoplasmoides gallisepticum (strain R(low / passage 15 / clone 2)) (Mycoplasma gallisepticum).